The sequence spans 344 residues: 2-methyl-6-phytyl-1,4-hydroquinone methyltransferase, chloroplastic (344 aa).

The N-terminal 62 residues, 1–62 (MACSMLNGVD…LTTVTKCTLS (62 aa)), are a transit peptide targeting the chloroplast. Topologically, residues 63–313 (ASERPASQPR…PVHPLVFLYR (251 aa)) are chloroplast intermembrane. An SAM motif I region spans residues 121–130 (VVDVGGGTGF). Positions 166 to 179 (CRIIEGDAEDLPFP) are SAM motif II. The SAM motif III stretch occupies residues 207 to 220 (RVLKLGGKACLIGP). Residues 314–334 (FLLGALASTYYVLVPIYMWIK) form a helical membrane-spanning segment. The Stromal portion of the chain corresponds to 335-344 (DKIFPKGMPL).

The protein belongs to the class I-like SAM-binding methyltransferase superfamily. MPBQ/MBSQ MT family.

Its subcellular location is the plastid. It localises to the chloroplast inner membrane. The catalysed reaction is 2-methyl-6-phytyl-1,4-benzene-1,4-diol + S-adenosyl-L-methionine = 2,3-dimethyl-6-phytylbenzene-1,4-diol + S-adenosyl-L-homocysteine + H(+). It catalyses the reaction 2-methyl-6-(all-trans-nonaprenyl)benzene-1,4-diol + S-adenosyl-L-methionine = plastoquinol-9 + S-adenosyl-L-homocysteine + H(+). The enzyme catalyses 6-geranylgeranyl-2-methylbenzene-1,4-diol + S-adenosyl-L-methionine = 6-geranylgeranyl-2,3-dimethylbenzene-1,4-diol + S-adenosyl-L-homocysteine + H(+). It participates in cofactor biosynthesis; tocopherol biosynthesis. In terms of biological role, involved in a key methylation step in both tocopherols (vitamin E) and plastoquinone synthesis. Catalyzes the conversion of 2-methyl-6-phytyl-1,4-hydroquinone (MPBQ) to 2,3-dimethyl-6-phytyl-1,4-hydroquinone (DMPQ, a substrate for tocopherol cyclase), and 2-methyl-6-solanyl-1,4-benzoquinone (MSBQ) to plastoquinone. The sequence is that of 2-methyl-6-phytyl-1,4-hydroquinone methyltransferase, chloroplastic from Spinacia oleracea (Spinach).